A 75-amino-acid polypeptide reads, in one-letter code: Small ribosomal subunit protein bS18 (75 aa).

This sequence belongs to the bacterial ribosomal protein bS18 family. As to quaternary structure, part of the 30S ribosomal subunit. Forms a tight heterodimer with protein bS6.

Functionally, binds as a heterodimer with protein bS6 to the central domain of the 16S rRNA, where it helps stabilize the platform of the 30S subunit. This Colwellia psychrerythraea (strain 34H / ATCC BAA-681) (Vibrio psychroerythus) protein is Small ribosomal subunit protein bS18.